The following is a 296-amino-acid chain: Light-independent protochlorophyllide reductase iron-sulfur ATP-binding protein (296 aa).

Residues 39–44 (GIGKST) and lysine 68 contribute to the ATP site. Mg(2+) is bound at residue serine 43. Residues cysteine 124 and cysteine 158 each contribute to the [4Fe-4S] cluster site. An ATP-binding site is contributed by 209 to 210 (NR).

This sequence belongs to the NifH/BchL/ChlL family. As to quaternary structure, homodimer. Protochlorophyllide reductase is composed of three subunits; ChlL, ChlN and ChlB. It depends on [4Fe-4S] cluster as a cofactor.

It catalyses the reaction chlorophyllide a + oxidized 2[4Fe-4S]-[ferredoxin] + 2 ADP + 2 phosphate = protochlorophyllide a + reduced 2[4Fe-4S]-[ferredoxin] + 2 ATP + 2 H2O. It functions in the pathway porphyrin-containing compound metabolism; chlorophyll biosynthesis (light-independent). In terms of biological role, component of the dark-operative protochlorophyllide reductase (DPOR) that uses Mg-ATP and reduced ferredoxin to reduce ring D of protochlorophyllide (Pchlide) to form chlorophyllide a (Chlide). This reaction is light-independent. The L component serves as a unique electron donor to the NB-component of the complex, and binds Mg-ATP. This chain is Light-independent protochlorophyllide reductase iron-sulfur ATP-binding protein, found in Prochlorococcus marinus (strain SARG / CCMP1375 / SS120).